The sequence spans 634 residues: Chaperone protein DnaK (634 aa).

Thr197 bears the Phosphothreonine; by autocatalysis mark. Residues 515 to 528 show a composition bias toward basic and acidic residues; sequence LHKEDDKKRKESVD. Disordered stretches follow at residues 515 to 536 and 595 to 634; these read LHKE…ADAI and YKAA…AEVE. Residues 603–615 are compositionally biased toward gly residues; that stretch reads NAGGTAGGNGNAG.

It belongs to the heat shock protein 70 family.

Its function is as follows. Acts as a chaperone. The protein is Chaperone protein DnaK of Campylobacter hominis (strain ATCC BAA-381 / DSM 21671 / CCUG 45161 / LMG 19568 / NCTC 13146 / CH001A).